The chain runs to 215 residues: UPF0056 membrane protein YhcE (215 aa).

6 helical membrane passes run 14–34 (FFIG…FISM), 54–74 (VAII…LFGI), 81–101 (IAGG…KLGE), 120–140 (VVPL…TIVW), 147–167 (ISYL…CWGL), and 189–209 (IMGL…IKGI).

This sequence belongs to the UPF0056 (MarC) family.

Its subcellular location is the cell membrane. This is UPF0056 membrane protein YhcE (ychE) from Escherichia coli (strain K12).